The primary structure comprises 457 residues: Oxysterol-binding protein-related protein 3C (457 aa).

Disordered regions lie at residues Asn-37–Trp-61 and Gln-363–Lys-393. Composition is skewed to basic and acidic residues over residues Gly-47 to Trp-61 and Gly-370 to Gly-391.

Belongs to the OSBP family. Expressed in roots, leaves, stems and flowers.

Functionally, may be involved in the transport of sterols. The sequence is that of Oxysterol-binding protein-related protein 3C (ORP3C) from Arabidopsis thaliana (Mouse-ear cress).